We begin with the raw amino-acid sequence, 261 residues long: 3-hydroxyacyl-CoA dehydrogenase type-2 (261 aa).

Ala-2 carries the post-translational modification N-acetylalanine. Ser-20, Leu-22, and Asp-41 together coordinate NAD(+). Lys-53 bears the N6-acetyllysine; alternate mark. N6-succinyllysine; alternate is present on Lys-53. The NAD(+) site is built by Asp-64 and Val-65. Lys-69 carries the N6-acetyllysine modification. Cys-91 contributes to the NAD(+) binding site. 2 positions are modified to N6-acetyllysine: Lys-99 and Lys-105. A substrate-binding site is contributed by Ser-155. NAD(+) contacts are provided by Tyr-168, Lys-172, Phe-201, and Thr-203. The Proton acceptor role is filled by Tyr-168. At Lys-212 the chain carries N6-acetyllysine; alternate. N6-succinyllysine; alternate is present on Lys-212.

Belongs to the short-chain dehydrogenases/reductases (SDR) family. As to quaternary structure, homotetramer. Component of mitochondrial ribonuclease P, a complex composed of TRMT10C/MRPP1, HSD17B10/MRPP2 and PRORP/MRPP3. Interacts with TRMT10C/MRPP1; forming the MRPP1-MRPP2 subcomplex of the mitochondrial ribonuclease P complex. In terms of tissue distribution, ubiquitously expressed in normal tissues but is overexpressed in neurons affected in AD.

It is found in the mitochondrion. The protein resides in the mitochondrion matrix. It localises to the mitochondrion nucleoid. It carries out the reaction a (3S)-3-hydroxyacyl-CoA + NAD(+) = a 3-oxoacyl-CoA + NADH + H(+). The catalysed reaction is (2S,3S)-3-hydroxy-2-methylbutanoyl-CoA + NAD(+) = 2-methyl-3-oxobutanoyl-CoA + NADH + H(+). The enzyme catalyses testosterone + NAD(+) = androst-4-ene-3,17-dione + NADH + H(+). It catalyses the reaction 5alpha-androstane-3alpha,17beta-diol + NAD(+) = 17beta-hydroxy-5alpha-androstan-3-one + NADH + H(+). It carries out the reaction 17beta-estradiol + NAD(+) = estrone + NADH + H(+). The catalysed reaction is cholate + NAD(+) = 3alpha,12alpha-dihydroxy-7-oxo-5beta-cholanate + NADH + H(+). The enzyme catalyses (3S)-3-hydroxybutanoyl-CoA + NAD(+) = acetoacetyl-CoA + NADH + H(+). It catalyses the reaction (3S)-hydroxyoctanoyl-CoA + NAD(+) = 3-oxooctanoyl-CoA + NADH + H(+). It carries out the reaction (3S)-hydroxyhexadecanoyl-CoA + NAD(+) = 3-oxohexadecanoyl-CoA + NADH + H(+). The catalysed reaction is 17beta-hydroxy-5alpha-androstan-3-one + NAD(+) = 5alpha-androstan-3,17-dione + NADH + H(+). The enzyme catalyses 5alpha-pregnan-20beta-ol-3-one + NAD(+) = 5alpha-pregnane-3,20-dione + NADH + H(+). It catalyses the reaction 3alpha-hydroxy-5alpha-pregnan-20-one + NAD(+) = 5alpha-pregnane-3,20-dione + NADH + H(+). It carries out the reaction cortisone + NAD(+) = 17alpha-hydroxypregn-4-en-3,11,20-trione-21-al + NADH + H(+). The catalysed reaction is 11-dehydrocorticosterone + NAD(+) = pregn-4-ene-3,11,20,21-tetraone + NADH + H(+). The enzyme catalyses cortisol + NAD(+) = 11beta,17alpha-dihydroxypregn-4-ene-3,20,21-trione + NADH + H(+). It catalyses the reaction chenodeoxycholate + NAD(+) = 7-oxolithocholate + NADH + H(+). It carries out the reaction ursodeoxycholate + NAD(+) = 7-oxolithocholate + NADH + H(+). The catalysed reaction is 3beta,7beta-dihydroxy-5beta-cholan-24-oate + NAD(+) = 3beta-hydroxy-7-oxo-5beta-cholan-24-oate + NADH + H(+). Its pathway is amino-acid degradation; L-isoleucine degradation. It participates in lipid metabolism; fatty acid beta-oxidation. The protein operates within steroid metabolism. It functions in the pathway lipid metabolism; bile acid biosynthesis. Its activity is regulated as follows. The phospholipase C-like activity toward cardiolipin is inhibited by amyloid-beta peptide. In terms of biological role, mitochondrial dehydrogenase involved in pathways of fatty acid, branched-chain amino acid and steroid metabolism. Acts as (S)-3-hydroxyacyl-CoA dehydrogenase in mitochondrial fatty acid beta-oxidation, a major degradation pathway of fatty acids. Catalyzes the third step in the beta-oxidation cycle, namely the reversible conversion of (S)-3-hydroxyacyl-CoA to 3-ketoacyl-CoA. Preferentially accepts straight medium- and short-chain acyl-CoA substrates with highest efficiency for (3S)-hydroxybutanoyl-CoA. Acts as 3-hydroxy-2-methylbutyryl-CoA dehydrogenase in branched-chain amino acid catabolic pathway. Catalyzes the oxidation of 3-hydroxy-2-methylbutanoyl-CoA into 2-methyl-3-oxobutanoyl-CoA, a step in isoleucine degradation pathway. Has hydroxysteroid dehydrogenase activity toward steroid hormones and bile acids. Catalyzes the oxidation of 3alpha-, 17beta-, 20beta- and 21-hydroxysteroids and 7alpha- and 7beta-hydroxy bile acids. Oxidizes allopregnanolone/brexanolone at the 3alpha-hydroxyl group, which is known to be critical for the activation of gamma-aminobutyric acid receptors (GABAARs) chloride channel. Has phospholipase C-like activity toward cardiolipin and its oxidized species. Likely oxidizes the 2'-hydroxyl in the head group of cardiolipin to form a ketone intermediate that undergoes nucleophilic attack by water and fragments into diacylglycerol, dihydroxyacetone and orthophosphate. Has higher affinity for cardiolipin with oxidized fatty acids and may degrade these species during the oxidative stress response to protect cells from apoptosis. By interacting with intracellular amyloid-beta, it may contribute to the neuronal dysfunction associated with Alzheimer disease (AD). Essential for structural and functional integrity of mitochondria. Its function is as follows. In addition to mitochondrial dehydrogenase activity, moonlights as a component of mitochondrial ribonuclease P, a complex that cleaves tRNA molecules in their 5'-ends. Together with TRMT10C/MRPP1, forms a subcomplex of the mitochondrial ribonuclease P, named MRPP1-MRPP2 subcomplex, which displays functions that are independent of the ribonuclease P activity. The MRPP1-MRPP2 subcomplex catalyzes the formation of N(1)-methylguanine and N(1)-methyladenine at position 9 (m1G9 and m1A9, respectively) in tRNAs; HSD17B10/MRPP2 acting as a non-catalytic subunit. The MRPP1-MRPP2 subcomplex also acts as a tRNA maturation platform: following 5'-end cleavage by the mitochondrial ribonuclease P complex, the MRPP1-MRPP2 subcomplex enhances the efficiency of 3'-processing catalyzed by ELAC2, retains the tRNA product after ELAC2 processing and presents the nascent tRNA to the mitochondrial CCA tRNA nucleotidyltransferase TRNT1 enzyme. Associates with mitochondrial DNA complexes at the nucleoids to initiate RNA processing and ribosome assembly. This Homo sapiens (Human) protein is 3-hydroxyacyl-CoA dehydrogenase type-2 (HSD17B10).